The primary structure comprises 328 residues: D-cysteine desulfhydrase (328 aa).

Lysine 51 is subject to N6-(pyridoxal phosphate)lysine.

It belongs to the ACC deaminase/D-cysteine desulfhydrase family. Homodimer. It depends on pyridoxal 5'-phosphate as a cofactor.

It catalyses the reaction D-cysteine + H2O = hydrogen sulfide + pyruvate + NH4(+) + H(+). Functionally, catalyzes the alpha,beta-elimination reaction of D-cysteine and of several D-cysteine derivatives. It could be a defense mechanism against D-cysteine. This Escherichia fergusonii (strain ATCC 35469 / DSM 13698 / CCUG 18766 / IAM 14443 / JCM 21226 / LMG 7866 / NBRC 102419 / NCTC 12128 / CDC 0568-73) protein is D-cysteine desulfhydrase.